A 383-amino-acid chain; its full sequence is Chaperone protein DnaJ (383 aa).

The 65-residue stretch at 5–69 (DYYDILGVSK…QKRAQYDQFG (65 aa)) folds into the J domain. A CR-type zinc finger spans residues 138-222 (GKTTTIKYDR…CHGAGHVHER (85 aa)). Zn(2+) is bound by residues Cys151, Cys154, Cys168, Cys171, Cys194, Cys197, Cys210, and Cys213. 4 CXXCXGXG motif repeats span residues 151-158 (CKTCHGTG), 168-175 (CPRCHGAG), 194-201 (CPECNGTG), and 210-217 (CDTCHGAG).

This sequence belongs to the DnaJ family. In terms of assembly, homodimer. It depends on Zn(2+) as a cofactor.

The protein localises to the cytoplasm. Functionally, participates actively in the response to hyperosmotic and heat shock by preventing the aggregation of stress-denatured proteins and by disaggregating proteins, also in an autonomous, DnaK-independent fashion. Unfolded proteins bind initially to DnaJ; upon interaction with the DnaJ-bound protein, DnaK hydrolyzes its bound ATP, resulting in the formation of a stable complex. GrpE releases ADP from DnaK; ATP binding to DnaK triggers the release of the substrate protein, thus completing the reaction cycle. Several rounds of ATP-dependent interactions between DnaJ, DnaK and GrpE are required for fully efficient folding. Also involved, together with DnaK and GrpE, in the DNA replication of plasmids through activation of initiation proteins. In Limosilactobacillus reuteri (strain DSM 20016) (Lactobacillus reuteri), this protein is Chaperone protein DnaJ.